The chain runs to 362 residues: Glucuronokinase 1 (362 aa).

Position 126–136 (126–136) interacts with ATP; it reads PRQTGLSGSSA. The Proton acceptor role is filled by Asp-179.

This sequence belongs to the GHMP kinase family. Mg(2+) serves as cofactor. Requires Mn(2+) as cofactor. Co(2+) is required as a cofactor. In terms of tissue distribution, highly expressed in pollen. Detected in seedlings, inflorescences, seeds, leaves and roots.

The enzyme catalyses D-glucuronate + ATP = 1-phospho-alpha-D-glucuronate + ADP + H(+). In terms of biological role, sugar-1-kinase with a strict substrate specificity for D-glucuronic acid and ATP. Involved in the biosynthesis of UDP-glucuronic acid (UDP-GlcA), providing nucleotide sugars for cell-wall polymers. May be also involved in a salvage pathway for glucuronic acid. The protein is Glucuronokinase 1 (GLCAK1) of Arabidopsis thaliana (Mouse-ear cress).